Consider the following 424-residue polypeptide: COUP transcription factor 1 (424 aa).

Positions 1 to 82 (MAMVVSSWRD…QGPPGSGQSQ (82 aa)) are disordered. The segment covering 39 to 68 (EQQQQQAGSGAPHTPQTPGQPGAPATPGTA) has biased composition (low complexity). The segment at residues 84–159 (HIECVVCGDK…VGMRREAVQR (76 aa)) is a DNA-binding region (nuclear receptor). 2 NR C4-type zinc fingers span residues 87-107 (CVVCGDKSSGKHYGQFTCEGC) and 123-147 (CRANRNCPIDQHHRNQCQYCRLKKC). The NR LBD domain maps to 185 to 411 (YLSGYISLLL…TLIRDMLLSG (227 aa)).

This sequence belongs to the nuclear hormone receptor family. NR2 subfamily. In terms of assembly, binds DNA as dimer; homodimer and probable heterodimer with NR2F6. Interacts with GTF2B; this interaction is direct. Interacts with COPS2.

The protein localises to the nucleus. Its function is as follows. Coup (chicken ovalbumin upstream promoter) transcription factor binds to the ovalbumin promoter and, in conjunction with another protein (S300-II) stimulates initiation of transcription. Binds to both direct repeats and palindromes of the 5'-AGGTCA-3' motif. Represses transcriptional activity of LHCG. This is COUP transcription factor 1 (NR2F1) from Bos taurus (Bovine).